The following is a 98-amino-acid chain: NADH-ubiquinone oxidoreductase chain 4L (98 aa).

The next 3 helical transmembrane spans lie at 2–22 (MMAV…TLMF), 26–46 (LMST…ITTI), and 59–79 (IPIV…ALLV).

It belongs to the complex I subunit 4L family. Core subunit of respiratory chain NADH dehydrogenase (Complex I) which is composed of 45 different subunits.

The protein localises to the mitochondrion inner membrane. It catalyses the reaction a ubiquinone + NADH + 5 H(+)(in) = a ubiquinol + NAD(+) + 4 H(+)(out). In terms of biological role, core subunit of the mitochondrial membrane respiratory chain NADH dehydrogenase (Complex I) which catalyzes electron transfer from NADH through the respiratory chain, using ubiquinone as an electron acceptor. Part of the enzyme membrane arm which is embedded in the lipid bilayer and involved in proton translocation. The polypeptide is NADH-ubiquinone oxidoreductase chain 4L (MT-ND4L) (Phodopus sungorus (Striped hairy-footed hamster)).